A 228-amino-acid chain; its full sequence is Apoptosis regulator R1 (228 aa).

Positions 1-21 (LNPKKKENNGVKNGDREKQHE) are enriched in basic and acidic residues. A disordered region spans residues 1–29 (LNPKKKENNGVKNGDREKQHETGNTIFRG). Positions 120–139 (SLFQGGVNWGRIVAFFVFGA) match the BH1 motif. The BH2 motif lies at 171–186 (DWIQSNGGWNGFLTLY). A helical membrane pass occupies residues 207–227 (TVLTGAVALGALMTVGALFAS).

The protein belongs to the Bcl-2 family.

It localises to the membrane. Its function is as follows. Could be the homolog of mammalian Bcl-W. In Xenopus laevis (African clawed frog), this protein is Apoptosis regulator R1.